The chain runs to 82 residues: Small ribosomal subunit protein bS20 (82 aa).

Residues 1–29 are disordered; sequence MPNIKSAKKDLRRSRAAAVRNRAQRSALR. The segment covering 16-29 has biased composition (low complexity); that stretch reads AAAVRNRAQRSALR.

The protein belongs to the bacterial ribosomal protein bS20 family.

Its function is as follows. Binds directly to 16S ribosomal RNA. The sequence is that of Small ribosomal subunit protein bS20 from Gemmatimonas aurantiaca (strain DSM 14586 / JCM 11422 / NBRC 100505 / T-27).